A 1175-amino-acid chain; its full sequence is Beta-agarase AgaO (1175 aa).

An N-terminal signal peptide occupies residues 1 to 29 (MRLSKSQGILPLAHAVLAAAIAYSTAATA). Positions 32–164 (YRLEAEDFTN…QWNLDKMELA (133 aa)) constitute a CBM6 1 domain. Positions 169-208 (SSSSSGGGSTSSSSSGGSSSSSGSGSSSSGGSPEEGGHVS) are disordered. Positions 178 to 200 (TSSSSSGGSSSSSGSGSSSSGGS) are enriched in low complexity. The region spanning 211–339 (FKLEAESAHH…QFNIDYVIFE (129 aa)) is the CBM6 2 domain. Residues 355-481 (IADVNDSCPG…ESGCSPSQVA (127 aa)) are disordered. Residues 382 to 393 (DTDKDGIADNRD) show a composition bias toward basic and acidic residues. Positions 471 to 481 (NESGCSPSQVA) are enriched in polar residues. Glutamate 661 serves as the catalytic Proton donor. Glutamate 832 (nucleophile) is an active-site residue.

This sequence belongs to the glycosyl hydrolase 86 family.

The enzyme catalyses Hydrolysis of (1-&gt;4)-beta-D-galactosidic linkages in agarose, giving the tetramer as the predominant product.. Activity and stability are strongly enhanced by CaCl(2). Activity is not affected by sulfhydryl inhibitors such as iodoacetoamide and p-chloromercuribenzoate or by thiol reagents such as dithiothreitol and 2-mercaptoethanol. Strongly inhibited by N-bromosuccinimide and sodium dodecyl sulfate. Functionally, endo-type beta-agarase, which degrades agarose and agarose oligosaccharides more polymerized than hexamers to yield neoagarohexaose (NA6) as the main product, with lesser amounts of neoagarotetraose (NA4) and neoagarobiose (NA2). The sequence is that of Beta-agarase AgaO from Microbulbifer thermotolerans.